Here is a 322-residue protein sequence, read N- to C-terminus: Transaldolase (322 aa).

The Schiff-base intermediate with substrate role is filled by Lys-136.

This sequence belongs to the transaldolase family. Type 1 subfamily. Homodimer.

Its subcellular location is the cytoplasm. The enzyme catalyses D-sedoheptulose 7-phosphate + D-glyceraldehyde 3-phosphate = D-erythrose 4-phosphate + beta-D-fructose 6-phosphate. Its pathway is carbohydrate degradation; pentose phosphate pathway; D-glyceraldehyde 3-phosphate and beta-D-fructose 6-phosphate from D-ribose 5-phosphate and D-xylulose 5-phosphate (non-oxidative stage): step 2/3. Transaldolase is important for the balance of metabolites in the pentose-phosphate pathway. The polypeptide is Transaldolase (Xanthomonas oryzae pv. oryzae (strain KACC10331 / KXO85)).